The primary structure comprises 257 residues: RNA polymerase sigma-G factor (257 aa).

Positions Asp-66 to Ile-79 match the Polymerase core binding motif. A DNA-binding region (H-T-H motif) is located at residues Gln-228–Lys-247.

It belongs to the sigma-70 factor family.

Functionally, sigma factors are initiation factors that promote the attachment of RNA polymerase to specific initiation sites and are then released. This sigma factor is responsible for the expression of sporulation specific genes. The sequence is that of RNA polymerase sigma-G factor (sigG) from Clostridium acetobutylicum (strain ATCC 824 / DSM 792 / JCM 1419 / IAM 19013 / LMG 5710 / NBRC 13948 / NRRL B-527 / VKM B-1787 / 2291 / W).